The primary structure comprises 82 residues: Small ribosomal subunit protein bS16 (82 aa).

The protein belongs to the bacterial ribosomal protein bS16 family.

The chain is Small ribosomal subunit protein bS16 from Alcanivorax borkumensis (strain ATCC 700651 / DSM 11573 / NCIMB 13689 / SK2).